The sequence spans 1347 residues: Protocadherin-11 X-linked (1347 aa).

Residues 1–23 form the signal peptide; sequence MDLLSGTYIFAVLLACVVFHSGA. Over 24-812 the chain is Extracellular; sequence QEKNYTIREE…VSSPTSDYVK (789 aa). Cadherin domains lie at 26 to 139, 140 to 249, 250 to 355, 362 to 466, 467 to 570, 571 to 673, and 677 to 795; these read KNYT…APLF, PATV…HPVF, KETE…VPSI, NPVN…APVF, TQSF…SPVF, THNE…KPVF, and PSNY…APVT. Residues Asn-27, Asn-48, and Asn-54 are each glycosylated (N-linked (GlcNAc...) asparagine). Asn-344 carries N-linked (GlcNAc...) asparagine glycosylation. Asn-553 is a glycosylation site (N-linked (GlcNAc...) asparagine). An N-linked (GlcNAc...) asparagine glycan is attached at Asn-773. Residues 813–833 traverse the membrane as a helical segment; sequence ILVAAVAGTITVVVVIFITAV. Topologically, residues 834-1347 are cytoplasmic; sequence VRCRQAPHLK…DSPVMEEHPL (514 aa). Disordered regions lie at residues 1057 to 1091, 1097 to 1116, and 1325 to 1347; these read LPEG…GYPQ, RATP…ESTF, and TFTP…EHPL.

It localises to the cell membrane. Functionally, potential calcium-dependent cell-adhesion protein. This chain is Protocadherin-11 X-linked (PCDH11X), found in Pan paniscus (Pygmy chimpanzee).